The sequence spans 507 residues: Microcystinase C (507 aa).

Residues 1 to 21 (MLDRRTLMGGILSMAGSKATG) form the signal peptide. Zn(2+)-binding residues include D167, H169, and H191.

The protein belongs to the peptidase M81 family. The cofactor is Zn(2+).

With respect to regulation, inhibited by the metal chelators EDTA and 1,10-phenanthroline. In terms of biological role, involved in peptidolytic degradation of cyclic heptapeptide hepatotoxin microcystin (MC). Cleaves both linear MC and the tetrapeptide degradation product of MC. Cleaves the Adda-Glu peptide bond of linear MC heptapeptides. This is Microcystinase C from Sphingomonas sp.